The chain runs to 227 residues: tRNA (guanine-N(1)-)-methyltransferase (227 aa).

Residues G112 and 131–136 each bind S-adenosyl-L-methionine; that span reads LGDFVL.

This sequence belongs to the RNA methyltransferase TrmD family. In terms of assembly, homodimer.

Its subcellular location is the cytoplasm. The catalysed reaction is guanosine(37) in tRNA + S-adenosyl-L-methionine = N(1)-methylguanosine(37) in tRNA + S-adenosyl-L-homocysteine + H(+). Functionally, specifically methylates guanosine-37 in various tRNAs. In Trichodesmium erythraeum (strain IMS101), this protein is tRNA (guanine-N(1)-)-methyltransferase.